Reading from the N-terminus, the 359-residue chain is Mannonate dehydratase (359 aa).

It belongs to the mannonate dehydratase family. Fe(2+) serves as cofactor. Mn(2+) is required as a cofactor.

It carries out the reaction D-mannonate = 2-dehydro-3-deoxy-D-gluconate + H2O. It functions in the pathway carbohydrate metabolism; pentose and glucuronate interconversion. Its function is as follows. Catalyzes the dehydration of D-mannonate. This chain is Mannonate dehydratase, found in Moorella thermoacetica (strain ATCC 39073 / JCM 9320).